Reading from the N-terminus, the 112-residue chain is Peptidyl-tRNA hydrolase (112 aa).

This sequence belongs to the PTH2 family.

It is found in the cytoplasm. It carries out the reaction an N-acyl-L-alpha-aminoacyl-tRNA + H2O = an N-acyl-L-amino acid + a tRNA + H(+). In terms of biological role, the natural substrate for this enzyme may be peptidyl-tRNAs which drop off the ribosome during protein synthesis. The protein is Peptidyl-tRNA hydrolase of Haloquadratum walsbyi (strain DSM 16790 / HBSQ001).